The sequence spans 629 residues: Chaperone protein HtpG (629 aa).

The tract at residues 1 to 337 is a; substrate-binding; it reads MAASKETMQF…SSDLPLNVSR (337 aa). Positions 338–554 are b; the sequence is EILQGNRVID…ERDMALYMQQ (217 aa). Residues 555–629 form a c region; that stretch reads LLKQAGHEIS…INQLMLALAG (75 aa).

The protein belongs to the heat shock protein 90 family. In terms of assembly, homodimer.

Its subcellular location is the cytoplasm. In terms of biological role, molecular chaperone. Has ATPase activity. In Acidithiobacillus ferrooxidans (strain ATCC 23270 / DSM 14882 / CIP 104768 / NCIMB 8455) (Ferrobacillus ferrooxidans (strain ATCC 23270)), this protein is Chaperone protein HtpG.